A 475-amino-acid chain; its full sequence is Membrane-bound lytic murein transglycosylase F (475 aa).

The first 15 residues, 1-15, serve as a signal peptide directing secretion; that stretch reads MKKLLLILCCITLLA. The tract at residues 16–258 is non-LT domain; that stretch reads ACQKVVVEQE…HLNEKYFAHV (243 aa). Residues 259–475 are LT domain; it reads KRFDYVDTRA…KTEAAQPQQP (217 aa). The active site involves E303.

It in the N-terminal section; belongs to the bacterial solute-binding protein 3 family. The protein in the C-terminal section; belongs to the transglycosylase Slt family.

It localises to the cell outer membrane. The catalysed reaction is Exolytic cleavage of the (1-&gt;4)-beta-glycosidic linkage between N-acetylmuramic acid (MurNAc) and N-acetylglucosamine (GlcNAc) residues in peptidoglycan, from either the reducing or the non-reducing ends of the peptidoglycan chains, with concomitant formation of a 1,6-anhydrobond in the MurNAc residue.. In terms of biological role, murein-degrading enzyme that degrades murein glycan strands and insoluble, high-molecular weight murein sacculi, with the concomitant formation of a 1,6-anhydromuramoyl product. Lytic transglycosylases (LTs) play an integral role in the metabolism of the peptidoglycan (PG) sacculus. Their lytic action creates space within the PG sacculus to allow for its expansion as well as for the insertion of various structures such as secretion systems and flagella. In Shewanella halifaxensis (strain HAW-EB4), this protein is Membrane-bound lytic murein transglycosylase F.